Consider the following 200-residue polypeptide: Superoxide dismutase [Mn] 1 (200 aa).

Residues histidine 29, histidine 76, aspartate 158, and histidine 162 each contribute to the Mn(2+) site.

This sequence belongs to the iron/manganese superoxide dismutase family. The cofactor is Mn(2+).

The enzyme catalyses 2 superoxide + 2 H(+) = H2O2 + O2. Its function is as follows. Destroys superoxide anion radicals which are normally produced within the cells and which are toxic to biological systems. This Haloferax volcanii (strain ATCC 29605 / DSM 3757 / JCM 8879 / NBRC 14742 / NCIMB 2012 / VKM B-1768 / DS2) (Halobacterium volcanii) protein is Superoxide dismutase [Mn] 1 (sod1).